Reading from the N-terminus, the 107-residue chain is Nucleoid-associated protein Hhal_0231 (107 aa).

2 disordered regions span residues 1–24 (MKGGLGNIMKQAQKMQEDMQKAQE) and 82–107 (VQRESQERMSGMAEGMGLPPGMKLPF). The span at 15 to 24 (MQEDMQKAQE) shows a compositional bias: basic and acidic residues.

The protein belongs to the YbaB/EbfC family. In terms of assembly, homodimer.

It is found in the cytoplasm. The protein resides in the nucleoid. Its function is as follows. Binds to DNA and alters its conformation. May be involved in regulation of gene expression, nucleoid organization and DNA protection. The polypeptide is Nucleoid-associated protein Hhal_0231 (Halorhodospira halophila (strain DSM 244 / SL1) (Ectothiorhodospira halophila (strain DSM 244 / SL1))).